A 557-amino-acid chain; its full sequence is Potassium-transporting ATPase potassium-binding subunit (557 aa).

The next 12 helical transmembrane spans lie at 5-25 (GFLL…PLGS), 63-83 (LCAI…MLLG), 132-152 (GLTV…FAFI), 170-190 (LLRI…LFFI), 253-273 (FVQM…FGEV), 283-303 (LLWA…WAEV), 329-349 (VLVS…AVIA), 356-376 (ALGG…FGGV), 379-399 (GLYG…LMIG), 416-436 (LTAL…ALAM), 484-504 (LLAF…MAIA), and 526-546 (LFVG…FIPA).

It belongs to the KdpA family. The system is composed of three essential subunits: KdpA, KdpB and KdpC.

Its subcellular location is the cell inner membrane. Its function is as follows. Part of the high-affinity ATP-driven potassium transport (or Kdp) system, which catalyzes the hydrolysis of ATP coupled with the electrogenic transport of potassium into the cytoplasm. This subunit binds the periplasmic potassium ions and delivers the ions to the membrane domain of KdpB through an intramembrane tunnel. This Shigella flexneri protein is Potassium-transporting ATPase potassium-binding subunit.